A 104-amino-acid chain; its full sequence is Protein KleF (104 aa).

The protein is Protein KleF (kleF) of Escherichia coli.